The chain runs to 166 residues: Phospholipase A2 inhibitor clone 02/03/06/07 (166 aa).

An N-terminal signal peptide occupies residues methionine 1 to glycine 19. Positions leucine 46 to glutamate 161 constitute a C-type lectin domain. 2 disulfides stabilise this stretch: cysteine 83/cysteine 160 and cysteine 138/cysteine 152. Asparagine 122 carries an N-linked (GlcNAc...) asparagine glycan.

The protein belongs to the alpha-type phospholipase A2 inhibitor family. As to quaternary structure, homotrimer; non-covalently linked. In terms of tissue distribution, expressed by the liver.

Its subcellular location is the secreted. Its function is as follows. This phospholipase A2 inhibitor binds directly phospholipase A2 in the presence or absence of calcium. This is Phospholipase A2 inhibitor clone 02/03/06/07 from Lachesis muta muta (Bushmaster).